The following is a 79-amino-acid chain: Small ribosomal subunit protein bS16 (79 aa).

It belongs to the bacterial ribosomal protein bS16 family.

In Nitratidesulfovibrio vulgaris (strain ATCC 29579 / DSM 644 / CCUG 34227 / NCIMB 8303 / VKM B-1760 / Hildenborough) (Desulfovibrio vulgaris), this protein is Small ribosomal subunit protein bS16.